The sequence spans 161 residues: uncharacterized protein (161 aa).

2 disordered regions span residues methionine 1–phenylalanine 67 and aspartate 80–glutamine 147. Residues asparagine 84–asparagine 126 are compositionally biased toward low complexity. The segment covering glycine 135–glutamine 147 has biased composition (polar residues).

This is an uncharacterized protein from Dictyostelium discoideum (Social amoeba).